The sequence spans 1018 residues: MVSYLTSCLSALSTLLLLLGSQLVCPQPSTEHRKVPQRMAVTEGTPEDSGSGSPGVWGSWGPWSACSRSCSGGVMEQTRPCLPSSYRARGGSRPNGRALSITGHVVSAVRTSVPLHRSQEDQRALAGSNASRQGPAVVRGSRHPQARGREPSERRSRTRGPIGPGKYGYGKAPYILPLQTDTTHTPQRLRRQRPSSRHSRSQEASASKQGYRPPTHQFSHSQPLYQSDSGPRSGLPPSEASIYQLPLTHDQSYPAASSLFHRPELSSHHGARPHGAAQAFPQHLRSTAISCIGAYRQYKLCNTNACPESGRSIREVQCASYNNKPFMGRFYEWEPFAEVKGNRKCELNCQATGYRFYVRQAEKVIDGTPCDQNGTAICVSGQCKSIGCDDFLGSDKVLDKCGVCGGDNTGCQVVSGVFKHALTSLGYHRVVEIPQGATKINITEMHKSNNYLALRSRSGRSIINGNWAIDRPGKYEGGGTMFTYKRPNEVSSTAGESFLAEGPTNEILDVYMIHQQPNPGVHYEYVIMRNNAISPQVPPHRRPGEPFNGQLEEEDRGQEDREEREKNQEKEDSQVEAPEVFTSESTQTFPVRHPERFPSHRPDNLVPPAPQPPRRSRDHNWKQLGTTECSTTCGKGSQYPIFRCVHRNTHEEVPESYCDSSMKPTPEEEPCNLFPCPAFWDIGEWSECSKTCGLGMQHRQVLCRQVYANRSLTVQPYRCQHLEKPETTSTCQLKICSEWQIRTDWTSCSVPCGVGQRTRDVKCVSNIGDMVHDEECNMKLRPNDIENCDMGPCAKSWFLTEWSERCSAECGAGVRTRSVVCMTNHVSSLPLEGCGNNRPVEATPCDNGPCTGKVEWFTGSWSQCSIECGSGTQQREVICVRKNADTFEVLDPYECSFLEKPPSQQACHLKPCGAKWFSTEWSMCSKSCQGGFRVREVRCLSDDMTPSSLCDPQLKPEERESCNTQDCVPEVDENCKDKYYNCNVVVQARLCVYNYYKTACCASCTRVANRHVGFLGSR.

The signal sequence occupies residues 1–26 (MVSYLTSCLSALSTLLLLLGSQLVCP). 3 disordered regions span residues 34–56 (KVPQ…SPGV), 116–240 (HRSQ…PSEA), and 534–623 (SPQV…NWKQ). In terms of domain architecture, TSP type-1 1 spans 54–307 (PGVWGSWGPW…YKLCNTNACP (254 aa)). The segment covering 187–199 (QRLRRQRPSSRHS) has biased composition (basic residues). Residues 216-230 (HQFSHSQPLYQSDSG) are compositionally biased toward polar residues. Basic and acidic residues-rich tracts occupy residues 558–573 (QEDR…KEDS) and 592–603 (RHPERFPSHRPD). 5 TSP type-1 domains span residues 676–737 (CPAF…KICS), 739–792 (WQIR…DMGP), 793–851 (CAKS…GPCT), 852–911 (GKVE…HLKP), and 912–968 (CGAK…QDCV). Residues 971–1008 (VDENCKDKYYNCNVVVQARLCVYNYYKTACCASCTRVA) enclose the PLAC domain.

Isoform 2 interacts with FBN1. Isoform 2 may interact with TGFB1. Both isoforms are expressed in the embryo from 7 dpc through 17. Isoform 1 is widely expressed in adult tissues. Isoform 2 is detected in brain, spinal cord, eye, kidney, stomach and uterus. Mainly observed in fibrillar extracellular matrices in elastic tissues (at protein level).

It localises to the secreted. The protein resides in the extracellular space. It is found in the extracellular matrix. In terms of biological role, promotes FBN1 matrix assembly. Attenuates TGFB signaling, possibly by accelerating the sequestration of large latent complexes of TGFB or active TGFB by FBN1 microfibril assembly, thereby negatively regulating the expression of TGFB regulatory targets, such as POSTN. The sequence is that of Thrombospondin type-1 domain-containing protein 4 (Thsd4) from Mus musculus (Mouse).